An 82-amino-acid chain; its full sequence is Large ribosomal subunit protein uL29 (82 aa).

It belongs to the universal ribosomal protein uL29 family.

This chain is Large ribosomal subunit protein uL29, found in Trichodesmium erythraeum (strain IMS101).